A 939-amino-acid chain; its full sequence is Valine--tRNA ligase (939 aa).

The 'HIGH' region motif lies at 45–55 (PNVTGTLHMGH). A 'KMSKS' region motif is present at residues 549–553 (KMSKS). ATP is bound at residue Lys552. A coiled-coil region spans residues 876–939 (AAETARLRKE…KIRVQLVKLA (64 aa)).

This sequence belongs to the class-I aminoacyl-tRNA synthetase family. ValS type 1 subfamily. In terms of assembly, monomer.

The protein localises to the cytoplasm. It catalyses the reaction tRNA(Val) + L-valine + ATP = L-valyl-tRNA(Val) + AMP + diphosphate. Catalyzes the attachment of valine to tRNA(Val). As ValRS can inadvertently accommodate and process structurally similar amino acids such as threonine, to avoid such errors, it has a 'posttransfer' editing activity that hydrolyzes mischarged Thr-tRNA(Val) in a tRNA-dependent manner. In Chromobacterium violaceum (strain ATCC 12472 / DSM 30191 / JCM 1249 / CCUG 213 / NBRC 12614 / NCIMB 9131 / NCTC 9757 / MK), this protein is Valine--tRNA ligase.